Consider the following 576-residue polypeptide: Pentatricopeptide repeat-containing protein At1g79080, chloroplastic (576 aa).

The N-terminal 37 residues, 1–37 (MSTLLNSVLSMASPESSPRKAVGFVSHIPSGFLHFSS), are a transit peptide targeting the chloroplast. PPR repeat units follow at residues 105–139 (NVAHSTQLLYDLCKANRLKKAIRVIELMVSSGIIP), 140–174 (DASAYTYLVNQLCKRGNVGYAMQLVEKMEDHGYPS), 175–209 (NTVTYNALVRGLCMLGSLNQSLQFVERLMQKGLAP), 210–244 (NAFTYSFLLEAAYKERGTDEAVKLLDEIIVKGGEP), 245–279 (NLVSYNVLLTGFCKEGRTDDAMALFRELPAKGFKA), 280–314 (NVVSYNILLRCLCCDGRWEEANSLLAEMDGGDRAP), 315–349 (SVVTYNILINSLAFHGRTEQALQVLKEMSKGNHQF), 352–386 (TATSYNPVIARLCKEGKVDLVVKCLDEMIYRRCKP), 387–417 (NEGTYNAIGSLCEHNSKVQEAFYIIQSLSNK), 422–456 (THDFYKSVITSLCRKGNTFAAFQLLYEMTRCGFDP), 457–487 (DAHTYSALIRGLCLEGMFTGAMEVLSIMEES), 493–527 (TVDNFNAMILGLCKIRRTDLAMEVFEMMVEKKRMP), and 528–562 (NETTYAILVEGIAHEDELELAKEVLDELRLRKVIG).

This sequence belongs to the PPR family. P subfamily.

The protein resides in the plastid. It localises to the chloroplast. The chain is Pentatricopeptide repeat-containing protein At1g79080, chloroplastic from Arabidopsis thaliana (Mouse-ear cress).